The following is a 126-amino-acid chain: Arginine decarboxylase proenzyme (126 aa).

The active-site Schiff-base intermediate with substrate; via pyruvic acid is the S74. Position 74 is a pyruvic acid (Ser); by autocatalysis (S74). H79 serves as the catalytic Proton acceptor; for processing activity. C94 serves as the catalytic Proton donor; for catalytic activity.

Belongs to the prokaryotic AdoMetDC family. Type 1 subfamily. In terms of assembly, heterooctamer of four alpha and four beta chains arranged as a tetramer of alpha/beta heterodimers. Pyruvate is required as a cofactor. Is synthesized initially as an inactive proenzyme. Formation of the active enzyme involves a self-maturation process in which the active site pyruvoyl group is generated from an internal serine residue via an autocatalytic post-translational modification. Two non-identical subunits are generated from the proenzyme in this reaction, and the pyruvate is formed at the N-terminus of the alpha chain, which is derived from the carboxyl end of the proenzyme. The post-translation cleavage follows an unusual pathway, termed non-hydrolytic serinolysis, in which the side chain hydroxyl group of the serine supplies its oxygen atom to form the C-terminus of the beta chain, while the remainder of the serine residue undergoes an oxidative deamination to produce ammonia and the pyruvoyl group blocking the N-terminus of the alpha chain.

It carries out the reaction L-arginine + H(+) = agmatine + CO2. It participates in amine and polyamine biosynthesis; agmatine biosynthesis; agmatine from L-arginine: step 1/1. In terms of biological role, specifically catalyzes the decarboxylation of L-arginine to agmatine. Has no S-adenosylmethionine decarboxylase (AdoMetDC) activity. The protein is Arginine decarboxylase proenzyme of Pyrobaculum aerophilum (strain ATCC 51768 / DSM 7523 / JCM 9630 / CIP 104966 / NBRC 100827 / IM2).